The following is a 185-amino-acid chain: Elongation factor P (185 aa).

The protein belongs to the elongation factor P family.

The protein localises to the cytoplasm. It participates in protein biosynthesis; polypeptide chain elongation. Involved in peptide bond synthesis. Stimulates efficient translation and peptide-bond synthesis on native or reconstituted 70S ribosomes in vitro. Probably functions indirectly by altering the affinity of the ribosome for aminoacyl-tRNA, thus increasing their reactivity as acceptors for peptidyl transferase. This chain is Elongation factor P, found in Azoarcus sp. (strain BH72).